Here is a 321-residue protein sequence, read N- to C-terminus: Lipoyl synthase (321 aa).

7 residues coordinate [4Fe-4S] cluster: Cys-68, Cys-73, Cys-79, Cys-94, Cys-98, Cys-101, and Ser-308. The region spanning 80–297 is the Radical SAM core domain; it reads FNHGTATFMI…KAEAMAMGFT (218 aa).

The protein belongs to the radical SAM superfamily. Lipoyl synthase family. It depends on [4Fe-4S] cluster as a cofactor.

It localises to the cytoplasm. It carries out the reaction [[Fe-S] cluster scaffold protein carrying a second [4Fe-4S](2+) cluster] + N(6)-octanoyl-L-lysyl-[protein] + 2 oxidized [2Fe-2S]-[ferredoxin] + 2 S-adenosyl-L-methionine + 4 H(+) = [[Fe-S] cluster scaffold protein] + N(6)-[(R)-dihydrolipoyl]-L-lysyl-[protein] + 4 Fe(3+) + 2 hydrogen sulfide + 2 5'-deoxyadenosine + 2 L-methionine + 2 reduced [2Fe-2S]-[ferredoxin]. Its pathway is protein modification; protein lipoylation via endogenous pathway; protein N(6)-(lipoyl)lysine from octanoyl-[acyl-carrier-protein]: step 2/2. In terms of biological role, catalyzes the radical-mediated insertion of two sulfur atoms into the C-6 and C-8 positions of the octanoyl moiety bound to the lipoyl domains of lipoate-dependent enzymes, thereby converting the octanoylated domains into lipoylated derivatives. The protein is Lipoyl synthase of Cronobacter sakazakii (strain ATCC BAA-894) (Enterobacter sakazakii).